A 62-amino-acid chain; its full sequence is Large ribosomal subunit protein bL28 (62 aa).

A disordered region spans residues 1 to 27 (MARKCVVTGRQTRSGNQRSHAMNSNKR). The segment covering 9 to 26 (GRQTRSGNQRSHAMNSNK) has biased composition (polar residues).

This sequence belongs to the bacterial ribosomal protein bL28 family.

This chain is Large ribosomal subunit protein bL28, found in Oceanobacillus iheyensis (strain DSM 14371 / CIP 107618 / JCM 11309 / KCTC 3954 / HTE831).